We begin with the raw amino-acid sequence, 85 residues long: Large ribosomal subunit protein bL27 (85 aa).

The interval 1–21 (MAHKKGVGSSKNGRESESKRL) is disordered.

It belongs to the bacterial ribosomal protein bL27 family.

The protein is Large ribosomal subunit protein bL27 of Porphyromonas gingivalis (strain ATCC 33277 / DSM 20709 / CIP 103683 / JCM 12257 / NCTC 11834 / 2561).